The following is a 276-amino-acid chain: Thymidylate synthase (276 aa).

Arg26 provides a ligand contact to dUMP. (6R)-5,10-methylene-5,6,7,8-tetrahydrofolate is bound at residue His56. 131–132 (RR) lines the dUMP pocket. Cys151 functions as the Nucleophile in the catalytic mechanism. Residues 178–181 (RSAD), Asn189, and 219–221 (HIY) contribute to the dUMP site. Residue Asp181 coordinates (6R)-5,10-methylene-5,6,7,8-tetrahydrofolate. A (6R)-5,10-methylene-5,6,7,8-tetrahydrofolate-binding site is contributed by Ala275.

This sequence belongs to the thymidylate synthase family. Bacterial-type ThyA subfamily. Homodimer.

The protein resides in the cytoplasm. The catalysed reaction is dUMP + (6R)-5,10-methylene-5,6,7,8-tetrahydrofolate = 7,8-dihydrofolate + dTMP. The protein operates within pyrimidine metabolism; dTTP biosynthesis. Catalyzes the reductive methylation of 2'-deoxyuridine-5'-monophosphate (dUMP) to 2'-deoxythymidine-5'-monophosphate (dTMP) while utilizing 5,10-methylenetetrahydrofolate (mTHF) as the methyl donor and reductant in the reaction, yielding dihydrofolate (DHF) as a by-product. This enzymatic reaction provides an intracellular de novo source of dTMP, an essential precursor for DNA biosynthesis. This chain is Thymidylate synthase, found in Polaromonas naphthalenivorans (strain CJ2).